Consider the following 189-residue polypeptide: Elongation factor P (189 aa).

Belongs to the elongation factor P family.

Its subcellular location is the cytoplasm. It participates in protein biosynthesis; polypeptide chain elongation. In terms of biological role, involved in peptide bond synthesis. Stimulates efficient translation and peptide-bond synthesis on native or reconstituted 70S ribosomes in vitro. Probably functions indirectly by altering the affinity of the ribosome for aminoacyl-tRNA, thus increasing their reactivity as acceptors for peptidyl transferase. This chain is Elongation factor P, found in Pseudomonas entomophila (strain L48).